A 249-amino-acid chain; its full sequence is 23S rRNA (guanosine-2'-O-)-methyltransferase RlmB (249 aa).

Residues glycine 200, isoleucine 220, and leucine 229 each contribute to the S-adenosyl-L-methionine site.

This sequence belongs to the class IV-like SAM-binding methyltransferase superfamily. RNA methyltransferase TrmH family. RlmB subfamily.

It is found in the cytoplasm. It carries out the reaction guanosine(2251) in 23S rRNA + S-adenosyl-L-methionine = 2'-O-methylguanosine(2251) in 23S rRNA + S-adenosyl-L-homocysteine + H(+). In terms of biological role, specifically methylates the ribose of guanosine 2251 in 23S rRNA. This Xanthomonas campestris pv. campestris (strain ATCC 33913 / DSM 3586 / NCPPB 528 / LMG 568 / P 25) protein is 23S rRNA (guanosine-2'-O-)-methyltransferase RlmB.